A 909-amino-acid chain; its full sequence is Protein NLP1 (909 aa).

Disordered regions lie at residues 51–71 (KSLK…DNSP), 536–556 (KEDP…PVPN), 568–605 (ASTP…RAKT), and 690–745 (NSPN…ENTG). A compositionally biased stretch (polar residues) spans 55–70 (QTEQSPSASTAMNDNS). The region spanning 595-676 (RRPGEKKRAK…MDSVQGAQGS (82 aa)) is the RWP-RK domain. The span at 690–716 (NSPNMSSNGPSLKSNEQPSHLNAQTDN) shows a compositional bias: polar residues. Low complexity predominate over residues 725-745 (RSPSSSCSKSSGSSNNNENTG). Residues 811-894 (AIKVKATFGE…HTIKISLNEA (84 aa)) enclose the PB1 domain.

The protein localises to the nucleus. In terms of biological role, probable transcription factor. This is Protein NLP1 (NLP1) from Arabidopsis thaliana (Mouse-ear cress).